The following is a 729-amino-acid chain: Fatty acid oxidation complex subunit alpha (729 aa).

Positions 1 to 189 (MLYKGDTLYL…KVGLVDAVVK (189 aa)) are enoyl-CoA hydratase/isomerase. Substrate is bound at residue Asp-296. Residues 311 to 729 (ETPKQAAVLG…AQPVGELQTA (419 aa)) form a 3-hydroxyacyl-CoA dehydrogenase region. Residues Met-324, Asp-343, 400–402 (VVE), Lys-407, and Ser-429 each bind NAD(+). His-450 acts as the For 3-hydroxyacyl-CoA dehydrogenase activity in catalysis. Residue Asn-453 participates in NAD(+) binding. Asn-500 and Tyr-660 together coordinate substrate. A disordered region spans residues 708–729 (SHNAPYYPQVEPAQPVGELQTA).

The protein in the N-terminal section; belongs to the enoyl-CoA hydratase/isomerase family. In the C-terminal section; belongs to the 3-hydroxyacyl-CoA dehydrogenase family. As to quaternary structure, heterotetramer of two alpha chains (FadB) and two beta chains (FadA).

It carries out the reaction a (3S)-3-hydroxyacyl-CoA + NAD(+) = a 3-oxoacyl-CoA + NADH + H(+). The enzyme catalyses a (3S)-3-hydroxyacyl-CoA = a (2E)-enoyl-CoA + H2O. It catalyses the reaction a 4-saturated-(3S)-3-hydroxyacyl-CoA = a (3E)-enoyl-CoA + H2O. The catalysed reaction is (3S)-3-hydroxybutanoyl-CoA = (3R)-3-hydroxybutanoyl-CoA. It carries out the reaction a (3Z)-enoyl-CoA = a 4-saturated (2E)-enoyl-CoA. The enzyme catalyses a (3E)-enoyl-CoA = a 4-saturated (2E)-enoyl-CoA. It participates in lipid metabolism; fatty acid beta-oxidation. Its function is as follows. Involved in the aerobic and anaerobic degradation of long-chain fatty acids via beta-oxidation cycle. Catalyzes the formation of 3-oxoacyl-CoA from enoyl-CoA via L-3-hydroxyacyl-CoA. It can also use D-3-hydroxyacyl-CoA and cis-3-enoyl-CoA as substrate. The chain is Fatty acid oxidation complex subunit alpha from Cronobacter sakazakii (strain ATCC BAA-894) (Enterobacter sakazakii).